The primary structure comprises 147 residues: Large ribosomal subunit protein uL11 (147 aa).

This sequence belongs to the universal ribosomal protein uL11 family. As to quaternary structure, part of the ribosomal stalk of the 50S ribosomal subunit. Interacts with L10 and the large rRNA to form the base of the stalk. L10 forms an elongated spine to which L12 dimers bind in a sequential fashion forming a multimeric L10(L12)X complex. One or more lysine residues are methylated.

Its function is as follows. Forms part of the ribosomal stalk which helps the ribosome interact with GTP-bound translation factors. The polypeptide is Large ribosomal subunit protein uL11 (Phocaeicola vulgatus (strain ATCC 8482 / DSM 1447 / JCM 5826 / CCUG 4940 / NBRC 14291 / NCTC 11154) (Bacteroides vulgatus)).